The sequence spans 367 residues: Phospho-N-acetylmuramoyl-pentapeptide-transferase (367 aa).

Helical transmembrane passes span 34-54, 78-98, 101-121, 135-155, 175-195, 206-226, 246-266, 270-290, 295-315, and 344-364; these read GAVVTGALFVFLFGPWIIDHL, TPTMGGLMILSGLTVGTVLWA, LNPYVWIVLAVTLGFGFVGFY, FGSKLRLLIEAAIALVACYAL, TVLHFGWFFVVFGAFVIVGAG, GLAIVPVMIATASFAMIAYLA, LAVLCGALLGAGLGFLWFNAP, IFMGDTGSLALGGMLGAIAVA, IVLAVIGGLFVLEAVSVIVQV, and QIVIRFWIISVMLALAGLSTL.

This sequence belongs to the glycosyltransferase 4 family. MraY subfamily. It depends on Mg(2+) as a cofactor.

It is found in the cell inner membrane. The catalysed reaction is UDP-N-acetyl-alpha-D-muramoyl-L-alanyl-gamma-D-glutamyl-meso-2,6-diaminopimeloyl-D-alanyl-D-alanine + di-trans,octa-cis-undecaprenyl phosphate = di-trans,octa-cis-undecaprenyl diphospho-N-acetyl-alpha-D-muramoyl-L-alanyl-D-glutamyl-meso-2,6-diaminopimeloyl-D-alanyl-D-alanine + UMP. It participates in cell wall biogenesis; peptidoglycan biosynthesis. In terms of biological role, catalyzes the initial step of the lipid cycle reactions in the biosynthesis of the cell wall peptidoglycan: transfers peptidoglycan precursor phospho-MurNAc-pentapeptide from UDP-MurNAc-pentapeptide onto the lipid carrier undecaprenyl phosphate, yielding undecaprenyl-pyrophosphoryl-MurNAc-pentapeptide, known as lipid I. The chain is Phospho-N-acetylmuramoyl-pentapeptide-transferase from Bradyrhizobium diazoefficiens (strain JCM 10833 / BCRC 13528 / IAM 13628 / NBRC 14792 / USDA 110).